A 247-amino-acid polypeptide reads, in one-letter code: SPX domain-containing protein 5 (247 aa).

An SPX domain is found at 1 to 139 (MKFGKRLKRQ…GGVLRLPVIA (139 aa)). Residues 224 to 247 (SDWLIQSVQPPPPPPPSSPLIIPT) form a disordered region. The segment covering 232-241 (QPPPPPPPSS) has biased composition (pro residues).

This Oryza sativa subsp. indica (Rice) protein is SPX domain-containing protein 5 (SPX5).